The primary structure comprises 358 residues: Peptide chain release factor 1 (358 aa).

Q233 is modified (N5-methylglutamine).

This sequence belongs to the prokaryotic/mitochondrial release factor family. In terms of processing, methylated by PrmC. Methylation increases the termination efficiency of RF1.

The protein resides in the cytoplasm. In terms of biological role, peptide chain release factor 1 directs the termination of translation in response to the peptide chain termination codons UAG and UAA. The polypeptide is Peptide chain release factor 1 (Clostridium botulinum (strain Okra / Type B1)).